The primary structure comprises 142 residues: Two-component response regulator ARR22 (142 aa).

A Response regulatory domain is found at 23-140 (NVLIVDDDPL…KIFPLISHLF (118 aa)). Asp74 carries the post-translational modification 4-aspartylphosphate.

It belongs to the ARR family. Type-A subfamily. In terms of processing, two-component system major event consists of a His-to-Asp phosphorelay between a sensor histidine kinase (HK) and a response regulator (RR). In plants, the His-to-Asp phosphorelay involves an additional intermediate named Histidine-containing phosphotransfer protein (HPt). This multistep phosphorelay consists of a His-Asp-His-Asp sequential transfer of a phosphate group between first a His and an Asp of the HK protein, followed by the transfer to a conserved His of the HPt protein and finally the transfer to an Asp in the receiver domain of the RR protein.

It localises to the nucleus. Functions as a response regulator involved in His-to-Asp phosphorelay signal transduction system. Phosphorylation of the Asp residue in the receiver domain activates the ability of the protein to promote the transcription of target genes. Type-A response regulators seem to act as negative regulators of the cytokinin signaling. In Arabidopsis thaliana (Mouse-ear cress), this protein is Two-component response regulator ARR22 (ARR22).